Consider the following 167-residue polypeptide: MSLALRSELVVDKTKRKKRRELSEEQKQEIKDAFELFDTDKDEAIDYHELKVAMRALGFDVKKADVLKILKDYDREATGKITFEDFNEVVTDWILERDPHEEILKAFKLFDDDDSGKISLRNLRRVARELGENMSDEELRAMIEEFDKDGDGEINQEEFIAIMTGDI.

4 consecutive EF-hand domains span residues 25 to 60, 61 to 96, 98 to 133, and 134 to 167; these read EQKQEIKDAFELFDTDKDEAIDYHELKVAMRALGFD, VKKADVLKILKDYDREATGKITFEDFNEVVTDWILE, DPHEEILKAFKLFDDDDSGKISLRNLRRVARELGEN, and MSDEELRAMIEEFDKDGDGEINQEEFIAIMTGDI. Serine 135 is modified (phosphoserine). Residues aspartate 147, aspartate 149, aspartate 151, glutamate 153, and glutamate 158 each coordinate Ca(2+).

It belongs to the centrin family. In terms of assembly, monomer. Component of the nuclear pore complex (NPC)-associated TREX-2 complex (transcription and export complex 2), composed of at least GANP, 2 copies of ENY2, PCID2, SEM1/DSS1, and either centrin CETN2 or centrin CETN3. The TREX-2 complex also associates with ALYREF/ALY and with the nucleoporin NUP153. Interacts with USP49.

The protein localises to the cytoplasm. Its subcellular location is the cytoskeleton. The protein resides in the microtubule organizing center. It is found in the centrosome. It localises to the nucleus. The protein localises to the nucleolus. Its subcellular location is the nucleus envelope. The protein resides in the nuclear pore complex. It is found in the centriole. In terms of biological role, plays a fundamental role in microtubule-organizing center structure and function. Functionally, as a component of the TREX-2 complex, involved in the export of mRNAs to the cytoplasm through the nuclear pores. The polypeptide is Centrin-3 (CETN3) (Homo sapiens (Human)).